Here is a 298-residue protein sequence, read N- to C-terminus: Acetylglutamate kinase (298 aa).

Residues 69 to 70 (GG), arginine 91, and asparagine 191 each bind substrate.

Belongs to the acetylglutamate kinase family. ArgB subfamily.

The protein resides in the cytoplasm. The catalysed reaction is N-acetyl-L-glutamate + ATP = N-acetyl-L-glutamyl 5-phosphate + ADP. It participates in amino-acid biosynthesis; L-arginine biosynthesis; N(2)-acetyl-L-ornithine from L-glutamate: step 2/4. In terms of biological role, catalyzes the ATP-dependent phosphorylation of N-acetyl-L-glutamate. This chain is Acetylglutamate kinase, found in Neisseria gonorrhoeae (strain ATCC 700825 / FA 1090).